Consider the following 377-residue polypeptide: Anhydro-N-acetylmuramic acid kinase (377 aa).

19–26 (GTSLDGVD) serves as a coordination point for ATP.

The protein belongs to the anhydro-N-acetylmuramic acid kinase family.

The enzyme catalyses 1,6-anhydro-N-acetyl-beta-muramate + ATP + H2O = N-acetyl-D-muramate 6-phosphate + ADP + H(+). It participates in amino-sugar metabolism; 1,6-anhydro-N-acetylmuramate degradation. Its pathway is cell wall biogenesis; peptidoglycan recycling. In terms of biological role, catalyzes the specific phosphorylation of 1,6-anhydro-N-acetylmuramic acid (anhMurNAc) with the simultaneous cleavage of the 1,6-anhydro ring, generating MurNAc-6-P. Is required for the utilization of anhMurNAc either imported from the medium or derived from its own cell wall murein, and thus plays a role in cell wall recycling. The protein is Anhydro-N-acetylmuramic acid kinase of Roseobacter denitrificans (strain ATCC 33942 / OCh 114) (Erythrobacter sp. (strain OCh 114)).